A 168-amino-acid chain; its full sequence is Xanthine-guanine phosphoribosyltransferase (168 aa).

Residues 43–44 (RG) and 102–110 (DDLVDTGAT) contribute to the 5-phospho-alpha-D-ribose 1-diphosphate site. Position 103 (D103) interacts with Mg(2+). Positions 106 and 149 each coordinate guanine. D106 and I149 together coordinate xanthine. Residues 106 to 110 (DTGAT) and 148 to 149 (WI) contribute to the GMP site.

It belongs to the purine/pyrimidine phosphoribosyltransferase family. XGPT subfamily. In terms of assembly, homotetramer. It depends on Mg(2+) as a cofactor.

Its subcellular location is the cell inner membrane. It catalyses the reaction GMP + diphosphate = guanine + 5-phospho-alpha-D-ribose 1-diphosphate. The enzyme catalyses XMP + diphosphate = xanthine + 5-phospho-alpha-D-ribose 1-diphosphate. It carries out the reaction IMP + diphosphate = hypoxanthine + 5-phospho-alpha-D-ribose 1-diphosphate. Its pathway is purine metabolism; GMP biosynthesis via salvage pathway; GMP from guanine: step 1/1. It functions in the pathway purine metabolism; XMP biosynthesis via salvage pathway; XMP from xanthine: step 1/1. Functionally, purine salvage pathway enzyme that catalyzes the transfer of the ribosyl-5-phosphate group from 5-phospho-alpha-D-ribose 1-diphosphate (PRPP) to the N9 position of the 6-oxopurines guanine and xanthine to form the corresponding ribonucleotides GMP (guanosine 5'-monophosphate) and XMP (xanthosine 5'-monophosphate), with the release of PPi. To a lesser extent, also acts on hypoxanthine. The protein is Xanthine-guanine phosphoribosyltransferase of Nitrobacter hamburgensis (strain DSM 10229 / NCIMB 13809 / X14).